Reading from the N-terminus, the 520-residue chain is D-aminopeptidase (520 aa).

The active-site Nucleophile is Ser62. The Proton donor/acceptor role is filled by Lys65. The interval 477 to 487 (QRSMDAPSPGE) is important for specificity. Asp481 is a binding site for substrate.

Belongs to the peptidase S12 family. As to quaternary structure, homodimer.

The catalysed reaction is Release of an N-terminal D-amino acid from a peptide, Xaa-|-Yaa-, in which Xaa is preferably D-Ala, D-Ser or D-Thr. D-amino acid amides and methyl esters also are hydrolyzed, as is glycine amide.. Inhibited by beta-lactam compounds such as 6-aminopenicillic acid, 7-aminocephalosporanic acid, benzylpenicillin and ampicillin. Inhibited by p-chloromercuribenzoate. Functionally, hydrolyzes N-terminal residues in D-amino acid-containing peptides. This Brucella anthropi (strain ATCC 49188 / DSM 6882 / CCUG 24695 / JCM 21032 / LMG 3331 / NBRC 15819 / NCTC 12168 / Alc 37) (Ochrobactrum anthropi) protein is D-aminopeptidase.